The primary structure comprises 465 residues: Mothers against decapentaplegic homolog 5 (465 aa).

Residue Thr-2 is modified to N-acetylthreonine. Positions 13–137 (PAVKRLLGWK…YKRVESPVLP (125 aa)) constitute an MH1 domain. Residues Cys-65, Cys-110, Cys-122, and His-127 each contribute to the Zn(2+) site. Residues 163-243 (NEPHMPQNAT…GQDNSQPMDT (81 aa)) are disordered. The span at 169-182 (QNATFPDSFHQPNS) shows a compositional bias: polar residues. A compositionally biased stretch (pro residues) spans 186–197 (PLSPNSPYPPSP). The segment covering 198–214 (ASSTYPNSPASSGPGSP) has biased composition (low complexity). The span at 234 to 243 (GQDNSQPMDT) shows a compositional bias: polar residues. The 195-residue stretch at 271–465 (WCSIVYYELN…SPLNPISSVS (195 aa)) folds into the MH2 domain. Phosphoserine occurs at positions 463 and 465.

It belongs to the dwarfin/SMAD family. In terms of assembly, homodimer. Forms trimers with the co-SMAD SMAD4. Interacts with PEBP2-alpha subunit and SMURF1. Interacts with SUV39H1 and SUV39H2. Interacts (via MH2 domain) with LEMD3. Interacts with WWP1. Interacts with TMEM119. Interacts with ZNF8. Interacts with RANBP3L. Interacts with HK1. Interacts with HGS; this interaction attenuates BMP signaling. Phosphorylated on serine by BMP (bone morphogenetic proteins) type 1 receptor kinase. Post-translationally, ubiquitin-mediated proteolysis by SMAD-specific E3 ubiquitin ligase SMURF1.

It localises to the cytoplasm. It is found in the nucleus. The protein resides in the mitochondrion. In terms of biological role, transcriptional regulator that plays a role in various cellular processes including embryonic development, cell differentiation, angiogenesis and tissue homeostasis. Upon BMP ligand binding to their receptors at the cell surface, is phosphorylated by activated type I BMP receptors (BMPRIs) and associates with SMAD4 to form a heteromeric complex which translocates into the nucleus acting as transcription factor. In turn, the hetero-trimeric complex recognizes cis-regulatory elements containing Smad Binding Elements (SBEs) to modulate the outcome of the signaling network. Non-phosphorylated SMAD5 has a cytoplasmic role in energy metabolism regulation by promoting mitochondrial respiration and glycolysis in response to cytoplasmic pH changes. Mechanistically, interacts with hexokinase 1/HK1 and thereby accelerates glycolysis. The polypeptide is Mothers against decapentaplegic homolog 5 (Smad5) (Rattus norvegicus (Rat)).